A 360-amino-acid polypeptide reads, in one-letter code: Phospho-N-acetylmuramoyl-pentapeptide-transferase (360 aa).

Transmembrane regions (helical) follow at residues 26–46 (AIVS…RMIA), 72–92 (PTMG…LWAY), 94–114 (SNPY…IGFV), 132–152 (WKYF…YLAG), 168–188 (VMPQ…VGTG), 199–219 (GLAI…AWAT), 236–256 (AGEL…FLWF), 263–283 (VFMG…IAVL), 288–308 (FLLV…ILQV), and 338–358 (VIVR…ATLK).

The protein belongs to the glycosyltransferase 4 family. MraY subfamily. Mg(2+) serves as cofactor.

It localises to the cell inner membrane. It carries out the reaction UDP-N-acetyl-alpha-D-muramoyl-L-alanyl-gamma-D-glutamyl-meso-2,6-diaminopimeloyl-D-alanyl-D-alanine + di-trans,octa-cis-undecaprenyl phosphate = di-trans,octa-cis-undecaprenyl diphospho-N-acetyl-alpha-D-muramoyl-L-alanyl-D-glutamyl-meso-2,6-diaminopimeloyl-D-alanyl-D-alanine + UMP. It participates in cell wall biogenesis; peptidoglycan biosynthesis. Catalyzes the initial step of the lipid cycle reactions in the biosynthesis of the cell wall peptidoglycan: transfers peptidoglycan precursor phospho-MurNAc-pentapeptide from UDP-MurNAc-pentapeptide onto the lipid carrier undecaprenyl phosphate, yielding undecaprenyl-pyrophosphoryl-MurNAc-pentapeptide, known as lipid I. This is Phospho-N-acetylmuramoyl-pentapeptide-transferase from Citrobacter koseri (strain ATCC BAA-895 / CDC 4225-83 / SGSC4696).